We begin with the raw amino-acid sequence, 938 residues long: Myocardin (938 aa).

The short motif at 12-27 (IRRKFRSVLQLRLQQR) is the MEF2C-binding element. RPEL repeat units lie at residues 18–43 (SVLQ…PPLK), 62–87 (DSLR…QAST), and 106–131 (DDLN…PMDS). Positions 37–64 (GLIPPLKSPTEFHDPRKKLDSAKTEDSL) are disordered. Basic and acidic residues predominate over residues 46–64 (TEFHDPRKKLDSAKTEDSL). Residues 153–205 (FEDDSSRDGLSPDQARSEDPQGSGGSTPDIKSTEAPLAGPLDTIQDLTPGSES) are HDAC5-binding. Disordered regions lie at residues 155–282 (DDSS…PPPM) and 339–381 (NEQM…PLPP). Positions 210–221 (TASQLSNQSDSG) are enriched in polar residues. A compositionally biased stretch (basic residues) spans 248-265 (NRHKKPKDPKPKVKKLKY). The segment covering 345–360 (NPNSSSTPLNNTPLSP) has biased composition (low complexity). Positions 361–372 (VKNSLSGQTGVS) are enriched in polar residues. An SAP domain is found at 383–417 (LDDLKVSELRQQLRIRGLPVSGTKTALVDRLRPFQ). A phosphoserine; by GSK3-beta mark is found at Ser457, Ser461, Ser465, and Ser469. The disordered stretch occupies residues 501-521 (ESLLSSLNGGSGPSEPDGLDS). Positions 522-566 (EKDKMLVEKQKVINQLTWKLRQEQRQVEELRMQLQKQKSGCNDQK) form a coiled coil. The interval 586 to 606 (AAQQASGKGQGHSSDSPPPAC) is disordered. Residues 588–600 (QQASGKGQGHSSD) are compositionally biased toward polar residues. Phosphoserine; by GSK3-beta occurs at positions 627, 631, 635, and 639. Composition is skewed to polar residues over residues 667–694 (GAQR…QSSD) and 701–713 (SIPS…SSPT). Positions 667-734 (GAQRENHGVS…DAVKQQMTRS (68 aa)) are disordered. The required for interaction with and ubiquitination by STUB1 stretch occupies residues 717–938 (ITQPPSYEDA…SPMDLHLQQW (222 aa)). Residues Ser815, Ser862, and Ser869 each carry the phosphoserine; by MAPK1 and MAPK3 modification. Thr896 bears the Phosphothreonine; by MAPK1 and MAPK3 mark.

Homodimer. Interacts with MLLT7/FOXO4. Interacts with SRF, its association does not depend on specific DNA sequences for ternary complex formation. Interacts (via C-terminal) with EP300 (via the CREB-binding domain). Interacts with HDAC4 and HDAC5. Interacts with MEF2C. Interacts (via C-terminus) with STUB1/CHIP. Interacts with PURB. Ubiquitinated; by STUB1/CHIP at the C-terminus, leading to its degradation by the proteasome. Phosphorylation by GSK3B is required for STUB1/CHIP-mediated ubiquitination. In terms of processing, phosphorylation negatively regulates transcriptional activity. Phosphorylated; by GSK3B. Abundantly expressed in the heart, aorta media and bladder, weakly expressed in the stomach, intestine and lung.

It localises to the nucleus. Its function is as follows. Smooth muscle cells (SM) and cardiac muscle cells-specific transcriptional factor which uses the canonical single or multiple CArG boxes DNA sequence. Acts as a cofactor of serum response factor (SRF) with the potential to modulate SRF-target genes. Plays a crucial role in cardiogenesis, urinary bladder development, and differentiation of the smooth muscle cell lineage (myogenesis). Positively regulates the transcription of genes involved in vascular smooth muscle contraction. The chain is Myocardin (Myocd) from Rattus norvegicus (Rat).